The primary structure comprises 389 residues: Probable acyl-CoA dehydrogenase fadE25 (389 aa).

This sequence belongs to the acyl-CoA dehydrogenase family. It depends on FAD as a cofactor.

It carries out the reaction a 2,3-saturated acyl-CoA + A = a 2,3-dehydroacyl-CoA + AH2. The polypeptide is Probable acyl-CoA dehydrogenase fadE25 (fadE25) (Mycobacterium leprae (strain TN)).